The chain runs to 316 residues: METWQELKVTVKREGEELVSNLLIELGAQGVAIEDSLDYVGNVDRFGEIFPEVEQQEEIVVTAYYPDTVDVTVVEVDLQARISELTDFMDLGEVKMGTTALAEEDWADNWKKYYEPARITHDLTIVPSWTDYEATAGEKIIKLDPGMAFGTGTHPTTKMSLFALEQVLRGGETVLDVGTGSGVLSIASSLLGAKEIFAYDLDDVAVRVAQENIELNPGMENIHVAAGDLLKGVEIEADVIVANILADILIHLTEDAYRLVKDEGYLIMSGIIKDKWDMVRQSAESAGFFLETHMIQGEWNACVFKKTKDISGVIGG.

The S-adenosyl-L-methionine site is built by threonine 157, glycine 178, aspartate 200, and asparagine 243.

This sequence belongs to the methyltransferase superfamily. PrmA family.

It is found in the cytoplasm. The enzyme catalyses L-lysyl-[protein] + 3 S-adenosyl-L-methionine = N(6),N(6),N(6)-trimethyl-L-lysyl-[protein] + 3 S-adenosyl-L-homocysteine + 3 H(+). Methylates ribosomal protein L11. This chain is Ribosomal protein L11 methyltransferase, found in Streptococcus pneumoniae (strain 70585).